Consider the following 349-residue polypeptide: UPF0324 inner membrane protein YeiH (349 aa).

Residues 1–12 (MTNITLQKQHRT) lie on the Periplasmic side of the membrane. Residues 13–32 (LWHFIPGLALSAVITGVALW) form a helical membrane-spanning segment. The Cytoplasmic portion of the chain corresponds to 33–35 (GGS). A helical transmembrane segment spans residues 36 to 58 (IPAVAGAGFSALTLAILLGMVLG). Topologically, residues 59–99 (NTIYPHIWKSCDGGVLFAKQYLLRLGIILYGFRLTFSQIAD) are periplasmic. Residues 100-122 (VGISGIIIDVLTLSSTFLLACFL) form a helical membrane-spanning segment. Residues 123–131 (GQKVFGLDK) lie on the Cytoplasmic side of the membrane. The chain crosses the membrane as a helical span at residues 132–151 (HTSWLIGAGSSICGAAAVLA). Residues 152 to 162 (TEPVVKAEASK) lie on the Periplasmic side of the membrane. A helical transmembrane segment spans residues 163 to 185 (VTVAVATVVIFGTVAIFLYPAIY). Residues 186-261 (PLMSQWFSPE…SGANSGEKSK (76 aa)) lie on the Cytoplasmic side of the membrane. A helical transmembrane segment spans residues 262–283 (ITIPWFAILFIVVAIFNSFHLL). Residues 284-289 (PQSVVN) are Periplasmic-facing. A helical membrane pass occupies residues 290-312 (MLVTLDTFLLAMAMAALGLTTHV). Topologically, residues 313-321 (SALKKAGAK) are cytoplasmic. Residues 322 to 344 (PLLMALVLFAWLIVGGGAINYVI) traverse the membrane as a helical segment. Residues 345–349 (QSVIA) are Periplasmic-facing.

Belongs to the UPF0324 family.

The protein resides in the cell inner membrane. The sequence is that of UPF0324 inner membrane protein YeiH (yeiH) from Escherichia coli O157:H7.